A 425-amino-acid chain; its full sequence is Serine--tRNA ligase (425 aa).

231-233 (TAE) serves as a coordination point for L-serine. Position 262-264 (262-264 (RSE)) interacts with ATP. An L-serine-binding site is contributed by glutamate 285. 349–352 (EISS) provides a ligand contact to ATP. Serine 385 provides a ligand contact to L-serine.

This sequence belongs to the class-II aminoacyl-tRNA synthetase family. Type-1 seryl-tRNA synthetase subfamily. In terms of assembly, homodimer. The tRNA molecule binds across the dimer.

The protein resides in the cytoplasm. The catalysed reaction is tRNA(Ser) + L-serine + ATP = L-seryl-tRNA(Ser) + AMP + diphosphate + H(+). It catalyses the reaction tRNA(Sec) + L-serine + ATP = L-seryl-tRNA(Sec) + AMP + diphosphate + H(+). It functions in the pathway aminoacyl-tRNA biosynthesis; selenocysteinyl-tRNA(Sec) biosynthesis; L-seryl-tRNA(Sec) from L-serine and tRNA(Sec): step 1/1. Functionally, catalyzes the attachment of serine to tRNA(Ser). Is also able to aminoacylate tRNA(Sec) with serine, to form the misacylated tRNA L-seryl-tRNA(Sec), which will be further converted into selenocysteinyl-tRNA(Sec). This Exiguobacterium sibiricum (strain DSM 17290 / CCUG 55495 / CIP 109462 / JCM 13490 / 255-15) protein is Serine--tRNA ligase.